Consider the following 342-residue polypeptide: 4-hydroxy-2-oxovalerate aldolase (342 aa).

In terms of domain architecture, Pyruvate carboxyltransferase spans 7 to 259 (ILVHDMSLRD…CTGVDLGRIQ (253 aa)). 15 to 16 (RD) lines the substrate pocket. Asp-16 serves as a coordination point for Mn(2+). Catalysis depends on His-19, which acts as the Proton acceptor. Substrate contacts are provided by Ser-169 and His-198. Mn(2+)-binding residues include His-198 and His-200. Tyr-289 is a substrate binding site.

It belongs to the 4-hydroxy-2-oxovalerate aldolase family.

The enzyme catalyses (S)-4-hydroxy-2-oxopentanoate = acetaldehyde + pyruvate. This chain is 4-hydroxy-2-oxovalerate aldolase, found in Alkalilimnicola ehrlichii (strain ATCC BAA-1101 / DSM 17681 / MLHE-1).